The following is a 458-amino-acid chain: NADH-ubiquinone oxidoreductase chain 4 (458 aa).

Transmembrane regions (helical) follow at residues 22 to 42 (FFWT…FIFT), 63 to 83 (MISA…ALAS), 96 to 116 (LLYI…FLST), 117 to 137 (NLMN…LIIF), 150 to 170 (IYLS…LLFL), 194 to 214 (ILWL…GFHL), 224 to 244 (TIAG…YGMI), 257 to 277 (LSLI…FICL), 284 to 306 (ALIA…TLSL), 311 to 333 (GAFI…ANSN), 350 to 370 (MLLP…LAMP), 391 to 413 (LTFP…MFML), and 434 to 454 (LTLF…NMII).

This sequence belongs to the complex I subunit 4 family.

The protein localises to the mitochondrion membrane. It carries out the reaction a ubiquinone + NADH + 5 H(+)(in) = a ubiquinol + NAD(+) + 4 H(+)(out). Its function is as follows. Core subunit of the mitochondrial membrane respiratory chain NADH dehydrogenase (Complex I) that is believed to belong to the minimal assembly required for catalysis. Complex I functions in the transfer of electrons from NADH to the respiratory chain. The immediate electron acceptor for the enzyme is believed to be ubiquinone. The polypeptide is NADH-ubiquinone oxidoreductase chain 4 (MT-ND4) (Myxine glutinosa (Atlantic hagfish)).